The chain runs to 555 residues: Dimethylaniline monooxygenase [N-oxide-forming] 4 (555 aa).

FAD-binding positions include glycine 9 to serine 13, glutamate 32, and leucine 40 to tryptophan 41. NADP(+) is bound by residues threonine 60–asparagine 61 and serine 195–aspartate 198. Residues tyrosine 515–cysteine 532 form a helical membrane-spanning segment.

This sequence belongs to the FMO family. Requires FAD as cofactor. As to expression, kidney and liver.

The protein resides in the microsome membrane. Its subcellular location is the endoplasmic reticulum membrane. It carries out the reaction N,N-dimethylaniline + NADPH + O2 + H(+) = N,N-dimethylaniline N-oxide + NADP(+) + H2O. This protein is involved in the oxidative metabolism of a variety of xenobiotics such as drugs and pesticides. The sequence is that of Dimethylaniline monooxygenase [N-oxide-forming] 4 (FMO4) from Oryctolagus cuniculus (Rabbit).